Consider the following 230-residue polypeptide: Oxygen-evolving enhancer protein 3-2, chloroplastic (230 aa).

Residues 1–49 (MAQAVTSMAGLRGASQAVLEGSLQINGSNRLNISRVSVGSQRTGLVIRA) constitute a chloroplast transit peptide. Residues 50–82 (QQNVSVPESSRRSVIGLVAAGLAGGSFVKAVFA) constitute a thylakoid transit peptide. A Phosphoserine modification is found at serine 125. The residue at position 195 (threonine 195) is a Phosphothreonine. Residue tyrosine 215 is modified to Phosphotyrosine. A Phosphoserine modification is found at serine 216. Phosphothreonine is present on threonine 218.

It belongs to the PsbQ family.

The protein resides in the plastid. It is found in the chloroplast thylakoid membrane. Functionally, required for photosystem II assembly/stability and photoautotrophic growth under low light conditions. The sequence is that of Oxygen-evolving enhancer protein 3-2, chloroplastic (PSBQ2) from Arabidopsis thaliana (Mouse-ear cress).